Consider the following 276-residue polypeptide: 2,3,4,5-tetrahydropyridine-2,6-dicarboxylate N-succinyltransferase (276 aa).

Residues arginine 104 and aspartate 141 each coordinate substrate.

This sequence belongs to the transferase hexapeptide repeat family. In terms of assembly, homotrimer.

The protein localises to the cytoplasm. It carries out the reaction (S)-2,3,4,5-tetrahydrodipicolinate + succinyl-CoA + H2O = (S)-2-succinylamino-6-oxoheptanedioate + CoA. It participates in amino-acid biosynthesis; L-lysine biosynthesis via DAP pathway; LL-2,6-diaminopimelate from (S)-tetrahydrodipicolinate (succinylase route): step 1/3. The protein is 2,3,4,5-tetrahydropyridine-2,6-dicarboxylate N-succinyltransferase of Pseudoalteromonas translucida (strain TAC 125).